Consider the following 112-residue polypeptide: Nucleoid-associated protein Pfl01_1806 (112 aa).

The protein belongs to the YbaB/EbfC family. As to quaternary structure, homodimer.

Its subcellular location is the cytoplasm. The protein resides in the nucleoid. In terms of biological role, binds to DNA and alters its conformation. May be involved in regulation of gene expression, nucleoid organization and DNA protection. The protein is Nucleoid-associated protein Pfl01_1806 of Pseudomonas fluorescens (strain Pf0-1).